The chain runs to 573 residues: Glutathione/L-cysteine transport system ATP-binding/permease protein CydC (573 aa).

Over M1–K15 the chain is Cytoplasmic. The next 2 membrane-spanning stretches (helical) occupy residues W16–L36 and T37–F57. In terms of domain architecture, ABC transmembrane type-1 spans L20 to Q306. Residues N58–R136 are Cytoplasmic-facing. Residues V137 to F157 traverse the membrane as a helical segment. Residues L158 to T161 are Periplasmic-facing. Residues L162–Y182 traverse the membrane as a helical segment. The Cytoplasmic segment spans residues R183–A249. Residues I250–V270 form a helical membrane-spanning segment. Residues G271 to P276 lie on the Periplasmic side of the membrane. Residues G277–V297 traverse the membrane as a helical segment. At T298–L573 the chain is on the cytoplasmic side. The region spanning L339–G572 is the ABC transporter domain. G373–S380 is an ATP binding site.

The protein belongs to the ABC transporter superfamily. Cysteine exporter (TC 3.A.1.129.1) family. Forms a heterodimer with CydD.

It is found in the cell inner membrane. It catalyses the reaction L-cysteine(in) + ATP + H2O = L-cysteine(out) + ADP + phosphate + H(+). It carries out the reaction glutathione(in) + ATP + H2O = glutathione(out) + ADP + phosphate + H(+). ATPase activity is stimulated by various thiol compounds. The presence of heme leads to a further enhancement of thiol-stimulated ATPase activity, although a large excess of heme inhibits activity. Glutathione transport is inhibited by sodium orthovanadate, an inhibitor of ABC-type transport systems, but not by the proton ionophore carbonyl cyanide m-chlorophenylhydrazone (CCCP). In terms of biological role, part of the ABC transporter complex CydDC that exports the reduced low-molecular-weight thiols cysteine and glutathione to the periplasm. Export of these thiol-containing redox-active molecules may be crucial for redox homeostasis in the periplasm, permitting correct assembly of various respiratory complexes and formation of correct disulfide bonds in periplasmic and secreted proteins. CydC contains transmembrane domains (TMD), which form a pore in the inner membrane, and an ATP-binding domain (NBD), which is responsible for energy generation. Required for the assembly of functional cytochrome bd-type quinol oxidases and periplasmic c-type cytochromes. Overexpression of CydDC under anaerobic conditions also results in the formation of a heme biosynthesis-derived pigment, P-574. CydDC binds heme b, but heme is probably not transported by the complex and instead has a role in regulating ATPase activity. Its function is as follows. Conversely, a more recent study suggests an alternative function of CydDC: authors suggest that CydDC does not mediate the export of L-cysteine but rather reduces cytoplasmic L-cystine to L-cysteine. The principle function of CydDC would be to maintain the reduced state of cytoplasmic L-cysteine, thereby providing an important connection between sulfur metabolism, oxidative stress and resistance to antibiotics. This Escherichia coli (strain K12) protein is Glutathione/L-cysteine transport system ATP-binding/permease protein CydC.